Consider the following 284-residue polypeptide: Alpha-S1-casein (284 aa).

The first 15 residues, 1 to 15 (MKLLILTCLVAAALA), serve as a signal peptide directing secretion. Disordered stretches follow at residues 21–44 (RRNAVSSQTQQENSSSEEQEIVKQ) and 78–111 (SSAEEQATASAQEDSSSSSSSSEESKDAIPSATE). 2 stretches are compositionally biased toward low complexity: residues 24-36 (AVSSQTQQENSSS) and 78-99 (SSAEEQATASAQEDSSSSSSSS). A phosphoserine mark is found at Ser-79, Ser-93, Ser-94, Ser-95, Ser-96, Ser-97, Ser-98, and Ser-99. 10 repeat units span residues 138-143 (LLQQAS), 144-149 (LAQQAS), 150-155 (LAQQAS), 156-161 (LAQQAL), 162-167 (LAQQPS), 168-173 (LAQQAA), 174-179 (LAQQAS), 180-185 (LAQQAS), 186-191 (LAQQAS), and 192-197 (LAQKHH). The interval 138–197 (LLQQASLAQQASLAQQASLAQQALLAQQPSLAQQAALAQQASLAQQASLAQQASLAQKHH) is 10 X 6 AA tandem repeats.

The protein belongs to the alpha-casein family. In terms of tissue distribution, mammary gland specific. Secreted in milk.

The protein resides in the secreted. Important role in the capacity of milk to transport calcium phosphate. The sequence is that of Alpha-S1-casein (Csn1s1) from Rattus norvegicus (Rat).